A 256-amino-acid polypeptide reads, in one-letter code: Isoprenyl transferase (256 aa).

Aspartate 33 is a catalytic residue. Aspartate 33 contacts Mg(2+). Residues 34–37 (GNGR), tryptophan 38, arginine 46, histidine 50, and 78–80 (STE) each bind substrate. Asparagine 81 acts as the Proton acceptor in catalysis. Substrate is bound by residues tryptophan 82, arginine 84, arginine 201, and 207–209 (RIS). A Mg(2+)-binding site is contributed by glutamate 220.

The protein belongs to the UPP synthase family. Homodimer. Requires Mg(2+) as cofactor.

Its function is as follows. Catalyzes the condensation of isopentenyl diphosphate (IPP) with allylic pyrophosphates generating different type of terpenoids. The chain is Isoprenyl transferase from Staphylococcus epidermidis (strain ATCC 35984 / DSM 28319 / BCRC 17069 / CCUG 31568 / BM 3577 / RP62A).